A 319-amino-acid polypeptide reads, in one-letter code: Ribonucleoside-diphosphate reductase small chain (319 aa).

Asp70, Glu101, and His104 together coordinate Fe cation. Residue Tyr108 is part of the active site. Fe cation-binding residues include Glu163, Glu197, and His200. The tract at residues 313 to 319 (FSLDVDF) is interaction with R1.

Belongs to the ribonucleoside diphosphate reductase small chain family. As to quaternary structure, interacts with RNR1/OPG080 subunit. Can interact with host RNR1 supunit. It depends on Fe cation as a cofactor.

It carries out the reaction a 2'-deoxyribonucleoside 5'-diphosphate + [thioredoxin]-disulfide + H2O = a ribonucleoside 5'-diphosphate + [thioredoxin]-dithiol. In terms of biological role, ribonucleoside-diphosphate reductase holoenzyme provides the precursors necessary for viral DNA synthesis. Allows virus growth in non-dividing cells. Catalyzes the biosynthesis of deoxyribonucleotides from the corresponding ribonucleotides. This chain is Ribonucleoside-diphosphate reductase small chain (OPG048), found in Vaccinia virus (strain Copenhagen) (VACV).